Consider the following 287-residue polypeptide: Pyridoxal kinase PdxY (287 aa).

Substrate is bound by residues serine 10 and 45 to 46 (TQ). Residues aspartate 112, alanine 144, glutamate 149, lysine 182, and 209 to 212 (RPLV) each bind ATP. Residue aspartate 224 coordinates substrate.

The protein belongs to the pyridoxine kinase family. PdxY subfamily. As to quaternary structure, homodimer. Mg(2+) serves as cofactor.

The catalysed reaction is pyridoxal + ATP = pyridoxal 5'-phosphate + ADP + H(+). It functions in the pathway cofactor metabolism; pyridoxal 5'-phosphate salvage; pyridoxal 5'-phosphate from pyridoxal: step 1/1. In terms of biological role, pyridoxal kinase involved in the salvage pathway of pyridoxal 5'-phosphate (PLP). Catalyzes the phosphorylation of pyridoxal to PLP. The polypeptide is Pyridoxal kinase PdxY (Shigella boydii serotype 4 (strain Sb227)).